The following is a 303-amino-acid chain: MNTFVLQLDEETIQHLIQTLKEYQVQNANPYIRFAAKFKQATILIYASRKVVFQGKNASAVAQELGYKPVVHKSNQDNIKNKQDCSLIGSDEVGNGSYFGGLAVVASFVKQADHAFLKELGVDDSKNLTDVKIKQIAPLLEAKLPHKALLLSPQKYNEVVGDNKLHNAVSVKVALHNQAIFLLLQEGWQPDKIVIDAFTSPKNYQKYLKNENNRFSNPLTLEERAEGKYLAVAVSSIIARKLFLDNLDELSQKVGFNLPSGAGQQSDKIASQILKTYGELGLETTAKLHFKNTKKAYQLLKKE.

The 218-residue stretch at 85-302 (CSLIGSDEVG…TKKAYQLLKK (218 aa)) folds into the RNase H type-2 domain. Positions 91, 92, and 196 each coordinate a divalent metal cation.

This sequence belongs to the RNase HII family. RnhC subfamily. Requires Mn(2+) as cofactor. Mg(2+) is required as a cofactor.

The protein resides in the cytoplasm. The enzyme catalyses Endonucleolytic cleavage to 5'-phosphomonoester.. Its function is as follows. Endonuclease that specifically degrades the RNA of RNA-DNA hybrids. This Streptococcus mutans serotype c (strain ATCC 700610 / UA159) protein is Ribonuclease HIII.